Here is a 163-residue protein sequence, read N- to C-terminus: Nucleotide-binding protein MAP_4063c (163 aa).

It belongs to the YajQ family.

Nucleotide-binding protein. This Mycolicibacterium paratuberculosis (strain ATCC BAA-968 / K-10) (Mycobacterium paratuberculosis) protein is Nucleotide-binding protein MAP_4063c.